We begin with the raw amino-acid sequence, 117 residues long: B-box domain protein 30 (117 aa).

The B box-type; atypical zinc finger occupies 27 to 73 (KAPVSCELCGENATVYCEADAAFLCRKCDRWVHSANFLARRHLRRVI). Zn(2+) is bound by residues Cys-32, Cys-35, Cys-54, and His-59. Residues 113–117 (PFVFL) carry the PFVFL motif.

In terms of assembly, interacts with CO (via B-box) and with TPL (via PFVFL motif). As to expression, highly expressed in shoot apical meristems and in vascular tissues of leaves. Also detected in petioles.

It is found in the nucleus. In terms of biological role, developmental regulator acting by forming heterodimeric complexes, that sequester CO and CO-like (COL) proteins into non-functional complexes. Engages CO and the transcriptional repressor TPL in a tripartite complex. Involved in the CO-mediated long-day flowering-promotion pathway. The sequence is that of B-box domain protein 30 from Arabidopsis thaliana (Mouse-ear cress).